The sequence spans 214 residues: ATP-dependent Clp protease proteolytic subunit (214 aa).

The active-site Nucleophile is the S113. H138 is a catalytic residue.

This sequence belongs to the peptidase S14 family. As to quaternary structure, fourteen ClpP subunits assemble into 2 heptameric rings which stack back to back to give a disk-like structure with a central cavity, resembling the structure of eukaryotic proteasomes.

It localises to the cytoplasm. The catalysed reaction is Hydrolysis of proteins to small peptides in the presence of ATP and magnesium. alpha-casein is the usual test substrate. In the absence of ATP, only oligopeptides shorter than five residues are hydrolyzed (such as succinyl-Leu-Tyr-|-NHMec, and Leu-Tyr-Leu-|-Tyr-Trp, in which cleavage of the -Tyr-|-Leu- and -Tyr-|-Trp bonds also occurs).. Functionally, cleaves peptides in various proteins in a process that requires ATP hydrolysis. Has a chymotrypsin-like activity. Plays a major role in the degradation of misfolded proteins. The protein is ATP-dependent Clp protease proteolytic subunit of Teredinibacter turnerae (strain ATCC 39867 / T7901).